The following is a 344-amino-acid chain: Short chain dehydrogenase/reductase mfmJ (344 aa).

NADP(+) is bound by residues Leu-51, Lys-76, Asp-99, Asn-126, Tyr-213, and Lys-217. Tyr-213 (proton donor) is an active-site residue. The active-site Lowers pKa of active site Tyr is the Lys-217.

It belongs to the short-chain dehydrogenases/reductases (SDR) family.

Its function is as follows. Short chain dehydrogenase/reductase; part of the gene cluster that mediates the biosynthesis of the phthalide-terpenoid hybrid 11'-O-desmethylfendlerol. MfmJ seems not to be involved directly in the biosynthesis of 11'-O-desmethylfendlerol and its role has still to be determined. The biosynthesis of 11'-O-desmethylfendlerol begins with the NR-PKS mfmB that forms 3,5-dimethylorsellinic acid (DMOA), which is then transformed into the phthalide 5,7-dihydroxy-4-(hydroxymethyl)-6-methylphthalide by the cytochrome P450 monooxygenase mfmA and the hydrolase mfmC. Subsequently, the methyltransferase mfmE catalyzes 7-O-methylation to yield 5-hydroxy-4-(hydroxymethyl)-7-methoxy-6-methylphthalide, which undergoes C-3 hydroxylation by the cytochrome P450 monooxygenase mfmF. The resultant cyclopolic acid (2,5-dihydroxy-4-(hydroxymethyl)-7-methoxy-6-methylphthalide) is then farnesylated by the DMATS-type prenyltransferase mfmD to afford 5-O-farnesylcyclopolic acid. Finally, the Pyr4-family terpene cyclase mfmH cyclizes the farnesyl moiety of 5-O-farnesylcyclopolic acid into a drimane-like structure, thus completing the biosynthesis of 11'-O-desmethylfendlerol. The chain is Short chain dehydrogenase/reductase mfmJ from Annulohypoxylon moriforme (Filamentous fungus).